Consider the following 398-residue polypeptide: MSTQAIRGARGLVLKWGAGRFYLDTVLLSVSLGLMLFGFVMVSSASLHLGEKMASDSFYFPKHQLVHILLGLAAGWGAARVRLDTLERHSRSLFWAGIALLVLVLIPGVGKSVNGSVRWINLFGLRVQVSEVFKLVAAIYVAGYISRHLDTVRTSVKGMIFPLSLLAIGAVLLLKEPDFGATAVVMATALGMLFLAGARLWVFVGLLGLVAVAGTVLIYTAEYRLRRVLSFLDPWADPLNSGFQLTQALIAFGRGEWQGVGLGSSVQKLFYLPEAHTDFLFSVIGEELGLWGATTVILLFAIVVWRALAIGRLAERSGNLFAAFLAYGIGIWLGLQSFINMGVNMGMLPTKGLTLPLMSYGGGSMMVVCAAIGLLFRIRSEAVASFLGNGRKGLWPGV.

Residues Met-1 to Arg-20 lie on the Cytoplasmic side of the membrane. A helical transmembrane segment spans residues Phe-21–Met-41. The Periplasmic segment spans residues Val-42–Ser-57. The helical transmembrane segment at Phe-58–Ala-78 threads the bilayer. The Cytoplasmic portion of the chain corresponds to Ala-79–Ser-92. The helical transmembrane segment at Leu-93 to Val-113 threads the bilayer. Residues Asn-114–Asn-121 are Periplasmic-facing. Residues Leu-122–Ala-142 traverse the membrane as a helical segment. Over Gly-143 to Arg-153 the chain is Cytoplasmic. The helical transmembrane segment at Thr-154–Leu-174 threads the bilayer. The Periplasmic portion of the chain corresponds to Lys-175–Pro-177. A helical transmembrane segment spans residues Asp-178–Ala-198. A topological domain (cytoplasmic) is located at residue Arg-199. Residues Leu-200–Thr-220 traverse the membrane as a helical segment. The Periplasmic portion of the chain corresponds to Ala-221–Gly-289. The chain crosses the membrane as a helical span at residues Leu-290 to Ile-310. At Gly-311–Gly-318 the chain is on the cytoplasmic side. The chain crosses the membrane as a helical span at residues Asn-319–Ile-339. The Periplasmic portion of the chain corresponds to Asn-340–Leu-355. A helical transmembrane segment spans residues Pro-356 to Phe-376. At Arg-377–Val-398 the chain is on the cytoplasmic side.

Belongs to the SEDS family. FtsW subfamily.

It is found in the cell inner membrane. It carries out the reaction [GlcNAc-(1-&gt;4)-Mur2Ac(oyl-L-Ala-gamma-D-Glu-L-Lys-D-Ala-D-Ala)](n)-di-trans,octa-cis-undecaprenyl diphosphate + beta-D-GlcNAc-(1-&gt;4)-Mur2Ac(oyl-L-Ala-gamma-D-Glu-L-Lys-D-Ala-D-Ala)-di-trans,octa-cis-undecaprenyl diphosphate = [GlcNAc-(1-&gt;4)-Mur2Ac(oyl-L-Ala-gamma-D-Glu-L-Lys-D-Ala-D-Ala)](n+1)-di-trans,octa-cis-undecaprenyl diphosphate + di-trans,octa-cis-undecaprenyl diphosphate + H(+). Its pathway is cell wall biogenesis; peptidoglycan biosynthesis. In terms of biological role, peptidoglycan polymerase that is essential for cell division. The polypeptide is Probable peptidoglycan glycosyltransferase FtsW (Methylococcus capsulatus (strain ATCC 33009 / NCIMB 11132 / Bath)).